Consider the following 410-residue polypeptide: Regulator of microtubule dynamics protein 2 (410 aa).

Residues 10-27 traverse the membrane as a helical segment; the sequence is ILGIVVGTAGISLLLLWY. Residues 71 to 109 adopt a coiled-coil conformation; it reads RQLQILEKLNELLTHMEELKEEIRVLKEAIPKLEEYIQG. Serine 121 is modified (phosphoserine). Basic residues predominate over residues 122-131; it reads PQHRARKRRL. Residues 122 to 153 are disordered; the sequence is PQHRARKRRLATVQSSATSNSSEEAESEGGYV. Phosphothreonine is present on threonine 139. A Phosphotyrosine modification is found at tyrosine 152. Phosphothreonine occurs at positions 154 and 157.

This sequence belongs to the RMDN family. Interacts with microtubules.

The protein localises to the membrane. It is found in the cytoplasm. It localises to the cytoskeleton. The protein resides in the spindle. Its subcellular location is the spindle pole. The polypeptide is Regulator of microtubule dynamics protein 2 (RMDN2) (Bos taurus (Bovine)).